Reading from the N-terminus, the 274-residue chain is Isoprenyl transferase (274 aa).

Residue aspartate 49 is part of the active site. Aspartate 49 is a binding site for Mg(2+). Substrate contacts are provided by residues glycine 50–arginine 53, phenylalanine 54, arginine 62, histidine 66, and serine 94–aspartate 96. Residue asparagine 97 is the Proton acceptor of the active site. Residues arginine 100, arginine 223, and arginine 229–serine 231 each bind substrate. Glutamate 242 is a Mg(2+) binding site.

The protein belongs to the UPP synthase family. Homodimer. It depends on Mg(2+) as a cofactor.

Functionally, catalyzes the condensation of isopentenyl diphosphate (IPP) with allylic pyrophosphates generating different type of terpenoids. This chain is Isoprenyl transferase, found in Deinococcus radiodurans (strain ATCC 13939 / DSM 20539 / JCM 16871 / CCUG 27074 / LMG 4051 / NBRC 15346 / NCIMB 9279 / VKM B-1422 / R1).